A 366-amino-acid chain; its full sequence is Ferredoxin--NADP reductase (366 aa).

FAD contacts are provided by aspartate 51, glutamine 59, tyrosine 64, valine 104, phenylalanine 139, aspartate 308, and threonine 349.

The protein belongs to the ferredoxin--NADP reductase type 2 family. In terms of assembly, homodimer. It depends on FAD as a cofactor.

It carries out the reaction 2 reduced [2Fe-2S]-[ferredoxin] + NADP(+) + H(+) = 2 oxidized [2Fe-2S]-[ferredoxin] + NADPH. The sequence is that of Ferredoxin--NADP reductase from Polaromonas naphthalenivorans (strain CJ2).